The primary structure comprises 143 residues: Large ribosomal subunit protein uL11 (143 aa).

Belongs to the universal ribosomal protein uL11 family. Part of the ribosomal stalk of the 50S ribosomal subunit. Interacts with L10 and the large rRNA to form the base of the stalk. L10 forms an elongated spine to which L12 dimers bind in a sequential fashion forming a multimeric L10(L12)X complex. In terms of processing, one or more lysine residues are methylated.

Functionally, forms part of the ribosomal stalk which helps the ribosome interact with GTP-bound translation factors. The sequence is that of Large ribosomal subunit protein uL11 from Nitrosomonas europaea (strain ATCC 19718 / CIP 103999 / KCTC 2705 / NBRC 14298).